Consider the following 540-residue polypeptide: 2,3-bisphosphoglycerate-independent phosphoglycerate mutase (540 aa).

Mn(2+) is bound by residues D25 and S75. S75 (phosphoserine intermediate) is an active-site residue. Residues H136, 166-167, R198, R204, 269-272, and K342 each bind substrate; these read RD and RPDR. 5 residues coordinate Mn(2+): D409, H413, D450, H451, and H468.

This sequence belongs to the BPG-independent phosphoglycerate mutase family. In terms of assembly, monomer. It depends on Mn(2+) as a cofactor.

It carries out the reaction (2R)-2-phosphoglycerate = (2R)-3-phosphoglycerate. Its pathway is carbohydrate degradation; glycolysis; pyruvate from D-glyceraldehyde 3-phosphate: step 3/5. Its function is as follows. Catalyzes the interconversion of 2-phosphoglycerate and 3-phosphoglycerate. The polypeptide is 2,3-bisphosphoglycerate-independent phosphoglycerate mutase (Prochlorococcus marinus subsp. pastoris (strain CCMP1986 / NIES-2087 / MED4)).